Reading from the N-terminus, the 445-residue chain is Coronin-A (445 aa).

WD repeat units follow at residues G77 to S117, G127 to T167, G170 to E209, and D259 to H299. Residues K410–T444 adopt a coiled-coil conformation.

Belongs to the WD repeat coronin family. In terms of assembly, binds to F-actin.

It is found in the cell surface. Functionally, required for normal motility. Participates in cytokinesis. This chain is Coronin-A (corA), found in Dictyostelium discoideum (Social amoeba).